The primary structure comprises 209 residues: Guanylate kinase (209 aa).

In terms of domain architecture, Guanylate kinase-like spans 10 to 189 (GLLLVLSAPS…AFSDLRSVVV (180 aa)). 17–24 (APSGAGKT) serves as a coordination point for ATP.

The protein belongs to the guanylate kinase family.

The protein resides in the cytoplasm. It catalyses the reaction GMP + ATP = GDP + ADP. Essential for recycling GMP and indirectly, cGMP. This is Guanylate kinase from Myxococcus xanthus (strain DK1622).